A 190-amino-acid chain; its full sequence is Copper-binding lipoprotein NosL (190 aa).

The first 23 residues, 1-23, serve as a signal peptide directing secretion; it reads MNALHRIGAGTLLAVLLAFGLTG. Residue C24 is the site of N-palmitoyl cysteine attachment. A lipid anchor (S-diacylglycerol cysteine) is attached at C24. Positions 170–190 are disordered; it reads MQHGGMHDHAPNGAHNAHAGH. The span at 180–190 shows a compositional bias: low complexity; the sequence is PNGAHNAHAGH.

Belongs to the NosL family. In terms of assembly, monomer.

The protein localises to the cell membrane. Functionally, may act as a metallochaperone involved in nitrous oxide reductase assembly. Specifically binds Cu(+). The protein is Copper-binding lipoprotein NosL of Stutzerimonas stutzeri (Pseudomonas stutzeri).